We begin with the raw amino-acid sequence, 311 residues long: uncharacterized protein (311 aa).

Belongs to the peptidase C1 family.

This is an uncharacterized protein from Acanthamoeba polyphaga mimivirus (APMV).